A 3677-amino-acid chain; its full sequence is Dystrophin (3677 aa).

The tract at residues 1 to 240 (MLWWEEVEDC…YITSLFQVLP (240 aa)) is actin-binding. 2 consecutive Calponin-homology (CH) domains span residues 15–119 (DVQK…LHWQ) and 134–240 (TNSE…QVLP). Positions 63-72 (PKEKGSTRVH) are ANK2- and ANK-3 binding. Spectrin repeat units lie at residues 342–447 (LDSY…SNLH), 451–557 (MDLQ…LLQD), 560–668 (LKWQ…QISQ), 728–828 (DITE…NWLE), 831–935 (NNII…ELQT), 944–1046 (RYQE…KLEE), 1049–1154 (NKLR…EALK), 1163–1264 (LQKD…TLEE), 1268–1464 (CWHE…LFQK), 1469–1569 (EQRL…QLEK), 1573–1676 (LSRK…NLLL), 1680–1777 (KHME…TGKA), 1779–1875 (IPLK…KALE), 1878–1980 (HQWY…TLHE), 2001–2098 (YLTE…ERQG), 2106–2209 (KWRH…RVEE), 2215–2316 (SEFQ…GELE), 2317–2415 (VHIK…LRTK), 2465–2569 (ADFN…QLNE), 2576–2678 (QWLE…ALEE), 2682–2786 (LLQQ…KKSL), 2800–2922 (KRLH…RKID), and 2927–3032 (RLQE…QLHE). The segment at 1416 to 1914 (SDLTSHEISL…PEPRDERKIK (499 aa)) is interaction with SYNM. Residues 3047–3080 (TSVQGPWERAISPNKVPYYINHETQTTCWDHPKM) enclose the WW domain. The segment at 3050–3400 (QGPWERAISP…TVLEGDNMET (351 aa)) is interaction with SYNM. A ZZ-type; degenerate zinc finger spans residues 3300–3356 (KHQAKCNICKECPIIGFRYRSLKHFNYDICQSCFFSGRVAKGHKMHYPMVEYCTPTT). Positions 3305, 3308, 3329, and 3332 each coordinate Zn(2+). The interval 3458–3510 (DDEHLLIQHYCQSLNQDSPLSQPRSPAQILISLESEERGELERILADLEEENR) is binds to SNTB1. Ser3475, Ser3482, and Ser3492 each carry phosphoserine. 2 disordered regions span residues 3520–3546 (KQQH…QSPR) and 3595–3677 (EAKV…EDTM). Composition is skewed to polar residues over residues 3599 to 3618 (NGTT…SSQP) and 3654 to 3664 (QLNNSFPSSRG). Phosphoserine is present on residues Ser3604, Ser3605, Ser3609, Ser3615, Ser3616, and Ser3658.

As to quaternary structure, interacts with SYNM. Interacts with the syntrophins SNTG1 and SNTG2. Interacts with KRT19. Component of the dystrophin-associated glycoprotein complex which is composed of three subcomplexes: a cytoplasmic complex comprised of DMD (or UTRN), DTNA and a number of syntrophins, such as SNTB1, SNTB2, SNTG1 and SNTG2, the transmembrane dystroglycan complex, and the sarcoglycan-sarcospan complex. Interacts with DAG1 (betaDAG1) with DMD; the interaction is inhibited by phosphorylation on the PPXY motif of DAG1. Interacts with SYNM; SNTA1 and SNTB1. Interacts with CMYA5. Directly interacts with ANK2 and ANK3; these interactions do not interfere with betaDAG1-binding and are necessary for proper localization in muscle cells. Identified in a dystroglycan complex that contains at least PRX, DRP2, UTRN, DMD and DAG1. Interacts with DTNB. Interacts with PGM5; the interaction is direct. Interacts with NOS1; localizes NOS1 to sarcolemma in muscle cells. In terms of tissue distribution, strongly expressed in skeletal muscle and weak expression observed in newborn brain which increases in adult brain.

The protein localises to the cell membrane. The protein resides in the sarcolemma. It is found in the cytoplasm. It localises to the cytoskeleton. Its subcellular location is the postsynaptic cell membrane. In terms of biological role, anchors the extracellular matrix to the cytoskeleton via F-actin. Ligand for dystroglycan. Component of the dystrophin-associated glycoprotein complex which accumulates at the neuromuscular junction (NMJ) and at a variety of synapses in the peripheral and central nervous systems and has a structural function in stabilizing the sarcolemma. Also implicated in signaling events and synaptic transmission. This is Dystrophin (Dmd) from Rattus norvegicus (Rat).